The sequence spans 202 residues: Tetranectin (202 aa).

Positions 1 to 21 are cleaved as a signal peptide; that stretch reads MELWGAYLLLCLFSLLTQVTT. An O-linked (GalNAc...) threonine glycan is attached at T25. 3 disulfides stabilise this stretch: C71–C81, C98–C197, and C173–C189. Positions 77-198 constitute a C-type lectin domain; that stretch reads VHMKCFLAFT…CRDQLPYICQ (122 aa).

As to quaternary structure, homotrimer. As to expression, found in plasma.

It localises to the secreted. Functionally, tetranectin binds to plasminogen and to isolated kringle 4. May be involved in the packaging of molecules destined for exocytosis. Plays a role in retinal function. The sequence is that of Tetranectin (CLEC3B) from Homo sapiens (Human).